We begin with the raw amino-acid sequence, 195 residues long: Interferon tau-6 (195 aa).

An N-terminal signal peptide occupies residues 1 to 23; sequence MAFVLSLLMALVLVSYGPGGSLG. 2 disulfides stabilise this stretch: cysteine 24–cysteine 122 and cysteine 52–cysteine 162. Asparagine 101 carries an N-linked (GlcNAc...) asparagine glycan.

Belongs to the alpha/beta interferon family. IFN-alphaII subfamily. In terms of tissue distribution, constitutively and exclusively expressed in the mononuclear cells of the extraembryonic trophectoderm.

The protein localises to the secreted. Its function is as follows. Paracrine hormone primarily responsible for maternal recognition of pregnancy. Interacts with endometrial receptors, probably type I interferon receptors, and blocks estrogen receptor expression, preventing the estrogen-induced increase in oxytocin receptor expression in the endometrium. This results in the suppression of the pulsatile endometrial release of the luteolytic hormone prostaglandin F2-alpha, hindering the regression of the corpus luteum (luteolysis) and therefore a return to ovarian cyclicity. This, and a possible direct effect of IFN-tau on prostaglandin synthesis, leads in turn to continued ovarian progesterone secretion, which stimulates the secretion by the endometrium of the nutrients required for the growth of the conceptus. In summary, displays particularly high antiviral and antiproliferative potency concurrently with particular weak cytotoxicity, high antiluteolytic activity and immunomodulatory properties. In contrast with other IFNs, IFN-tau is not virally inducible. The chain is Interferon tau-6 (IFNT6) from Ovis aries (Sheep).